The chain runs to 275 residues: Large ribosomal subunit protein uL2 (275 aa).

2 disordered regions span residues 24-47 (IHKG…NHHG) and 227-261 (PVDH…KTRK).

Belongs to the universal ribosomal protein uL2 family. Part of the 50S ribosomal subunit. Forms a bridge to the 30S subunit in the 70S ribosome.

Its function is as follows. One of the primary rRNA binding proteins. Required for association of the 30S and 50S subunits to form the 70S ribosome, for tRNA binding and peptide bond formation. It has been suggested to have peptidyltransferase activity; this is somewhat controversial. Makes several contacts with the 16S rRNA in the 70S ribosome. The polypeptide is Large ribosomal subunit protein uL2 (Xylella fastidiosa (strain M12)).